The sequence spans 75 residues: DNA-directed RNA polymerase subunit omega (75 aa).

It belongs to the RNA polymerase subunit omega family. As to quaternary structure, in cyanobacteria the RNAP catalytic core is composed of 2 alpha, 1 beta, 1 beta', 1 gamma and 1 omega subunit. When a sigma factor is associated with the core the holoenzyme is formed, which can initiate transcription.

It carries out the reaction RNA(n) + a ribonucleoside 5'-triphosphate = RNA(n+1) + diphosphate. Promotes RNA polymerase assembly. Latches the N- and C-terminal regions of the beta' subunit thereby facilitating its interaction with the beta and alpha subunits. This Gloeothece citriformis (strain PCC 7424) (Cyanothece sp. (strain PCC 7424)) protein is DNA-directed RNA polymerase subunit omega.